The primary structure comprises 164 residues: C-type lectin 1 (164 aa).

The signal sequence occupies residues 1–23 (MGRFLFASLGLLVVAFSLSGTGA). 3 cysteine pairs are disulfide-bonded: C27-C38, C55-C154, and C129-C146. The 122-residue stretch at 34–155 (YNVSCYKLFY…CTLLHPFLCQ (122 aa)) folds into the C-type lectin domain. N-linked (GlcNAc...) asparagine glycosylation is found at N35 and N109. Residues 119–121 (EPN) carry the Mannose-binding motif. Residues E127, N142, and D143 each contribute to the Ca(2+) site.

This sequence belongs to the true venom lectin family. In terms of tissue distribution, expressed by the venom gland.

Its subcellular location is the secreted. In terms of biological role, mannose-binding lectin which recognizes specific carbohydrate structures and agglutinates a variety of animal cells by binding to cell-surface glycoproteins and glycolipids. May be a calcium-dependent lectin. The sequence is that of C-type lectin 1 from Hydrophis hardwickii (Hardwick's spine-bellied seasnake).